A 246-amino-acid chain; its full sequence is Glucosamine-6-phosphate deaminase (246 aa).

Catalysis depends on Asp-67, which acts as the Proton acceptor; for enolization step. Asn-136 (for ring-opening step) is an active-site residue. The active-site Proton acceptor; for ring-opening step is His-138. Glu-143 functions as the For ring-opening step in the catalytic mechanism.

The protein belongs to the glucosamine/galactosamine-6-phosphate isomerase family. NagB subfamily.

It carries out the reaction alpha-D-glucosamine 6-phosphate + H2O = beta-D-fructose 6-phosphate + NH4(+). The protein operates within amino-sugar metabolism; N-acetylneuraminate degradation; D-fructose 6-phosphate from N-acetylneuraminate: step 5/5. Its function is as follows. Catalyzes the reversible isomerization-deamination of glucosamine 6-phosphate (GlcN6P) to form fructose 6-phosphate (Fru6P) and ammonium ion. This is Glucosamine-6-phosphate deaminase from Halalkalibacterium halodurans (strain ATCC BAA-125 / DSM 18197 / FERM 7344 / JCM 9153 / C-125) (Bacillus halodurans).